Here is a 274-residue protein sequence, read N- to C-terminus: Large ribosomal subunit protein uL2 (274 aa).

A disordered region spans residues 200 to 274; that stretch reads HALEKSGKAG…SKYIIERRKK (75 aa). Composition is skewed to basic residues over residues 207–220 and 255–274; these read KAGR…RPRN and LKTR…RRKK.

Belongs to the universal ribosomal protein uL2 family. Part of the 50S ribosomal subunit. Forms a bridge to the 30S subunit in the 70S ribosome.

In terms of biological role, one of the primary rRNA binding proteins. Required for association of the 30S and 50S subunits to form the 70S ribosome, for tRNA binding and peptide bond formation. It has been suggested to have peptidyltransferase activity; this is somewhat controversial. Makes several contacts with the 16S rRNA in the 70S ribosome. This chain is Large ribosomal subunit protein uL2, found in Parabacteroides distasonis (strain ATCC 8503 / DSM 20701 / CIP 104284 / JCM 5825 / NCTC 11152).